An 86-amino-acid polypeptide reads, in one-letter code: Large ribosomal subunit protein bL31B (86 aa).

It belongs to the bacterial ribosomal protein bL31 family. Type B subfamily. In terms of assembly, part of the 50S ribosomal subunit.

This is Large ribosomal subunit protein bL31B from Cupriavidus taiwanensis (strain DSM 17343 / BCRC 17206 / CCUG 44338 / CIP 107171 / LMG 19424 / R1) (Ralstonia taiwanensis (strain LMG 19424)).